We begin with the raw amino-acid sequence, 517 residues long: Sterol 14-alpha demethylase CYP51C (517 aa).

Residues 10 to 30 (TLPLSVSIPLTTSIIIILSIV) form a helical membrane-spanning segment. Tyr-115 provides a ligand contact to lanosterol. Gly-300 contacts itraconazole. A heme-binding site is contributed by Cys-458.

This sequence belongs to the cytochrome P450 family. Heme serves as cofactor.

It is found in the endoplasmic reticulum membrane. It functions in the pathway steroid metabolism; ergosterol biosynthesis. Together with cyp51A and cyp51B, encodes the sterol 14alpha-demethylase that plays a critical role in the third module of ergosterol biosynthesis pathway, being ergosterol the major sterol component in fungal membranes that participates in a variety of functions. Cyp51C does not seem to encode an active sterol 14-alpha-demethylase, but can impact indirectly on sterol 14alpha-demethylation, and is required for full virulence on host wheat ears, but not on Arabidopsis floral tissue or the fruits of apple and tomato. The third module or late pathway involves the ergosterol synthesis itself through consecutive reactions that mainly occur in the endoplasmic reticulum (ER) membrane. In filamentous fungi, during the initial step of this module, lanosterol (lanosta-8,24-dien-3beta-ol) can be metabolized to eburicol. Sterol 14alpha-demethylase catalyzes the three-step oxidative removal of the 14alpha-methyl group (C-32) of both these sterols in the form of formate, and converts eburicol and lanosterol to 14-demethyleburicol (4,4,24-trimethylergosta-8,14,24(28)-trienol) and 4,4-dimethyl-5alpha-cholesta-8,14,24-trien-3beta-ol, respectively, which are further metabolized by other enzymes in the pathway to ergosterol. This Gibberella zeae (strain ATCC MYA-4620 / CBS 123657 / FGSC 9075 / NRRL 31084 / PH-1) (Wheat head blight fungus) protein is Sterol 14-alpha demethylase CYP51C.